The primary structure comprises 65 residues: Beta-mammal toxin Tpa2 (65 aa).

Residues 2–64 form the LCN-type CS-alpha/beta domain; that stretch reads KEGYLVGNDG…TWSRATNRCG (63 aa). 4 cysteine pairs are disulfide-bonded: C12–C63, C16–C38, C24–C44, and C28–C46.

Expressed by the venom gland.

It is found in the secreted. In terms of biological role, beta toxins bind voltage-independently at site-4 of sodium channels (Nav) and shift the voltage of activation toward more negative potentials thereby affecting sodium channel activation and promoting spontaneous and repetitive firing. This toxin is lethal to mice. The polypeptide is Beta-mammal toxin Tpa2 (Tityus pachyurus (Colombian scorpion)).